The sequence spans 141 residues: Ubiquitin-like protein ATG12 (141 aa).

The disordered stretch occupies residues 1 to 53 (MSEDSEVVLQLPSAPVGAGGESLPELSPETATPEPPSSAAVSPGTEEPPGDTK). Residues 23-40 (LPELSPETATPEPPSSAA) are compositionally biased toward low complexity. Gly-141 participates in a covalent cross-link: Glycyl lysine isopeptide (Gly-Lys) (interchain with K-? in acceptor protein).

It belongs to the ATG12 family. As to quaternary structure, forms a conjugate with ATG5. Part of the minor complex composed of 4 sets of ATG12-ATG5 and ATG16L1 (400 kDa); this complex interacts with ATG3 leading to disruption of ATG7 interaction and promotion of ATG8-like proteins lipidation. Forms an 800-kDa complex composed of ATG12-ATG5 and ATG16L2. Interacts with DHX58/RIG-1, IFIH1/MDA5 and MAVS/IPS-1 in monomeric form as well as in ATG12-ATG5 conjugate. The interaction with MAVS is further enhanced upon vesicular stomatitis virus (VSV) infection. Interacts with ATG3; this interaction is essential for phosphatidylethanolamine (PE)-conjugated ATG8-like proteins formation. Interacts with ATG7. Interacts with ATG10. The ATG12-ATG5 conjugate interacts with RAB33A; this interaction is bridged by ATG16L1 and promotes ATG12-ATG5-ATG16L1 complex recruitment to phagophores. Interacts with TECPR1. Interacts with SH3BGRL. The ATG12-ATG5 conjugate interacts with PDCD6IP (via the BRO1 domain); this interaction is bridged by ATG12 and promotes multiple PDCD6IP-mediated functions such as endolysosomal trafficking, macroautophagy and exosome biogenesis. Acetylated by EP300. As to expression, ubiquitous.

The protein localises to the cytoplasm. The protein resides in the preautophagosomal structure membrane. Ubiquitin-like protein involved in autophagy vesicles formation. Conjugation with ATG5 through a ubiquitin-like conjugating system involving also ATG7 as an E1-like activating enzyme and ATG10 as an E2-like conjugating enzyme, is essential for its function. The ATG12-ATG5 conjugate acts as an E3-like enzyme which is required for lipidation of ATG8 family proteins and their association to the vesicle membranes. As part of the ATG8 conjugation system with ATG5 and ATG16L1, required for recruitment of LRRK2 to stressed lysosomes and induction of LRRK2 kinase activity in response to lysosomal stress. Functionally, (Microbial infection) May act as a proviral factor. In association with ATG5, negatively regulates the innate antiviral immune response by impairing the type I IFN production pathway upon vesicular stomatitis virus (VSV) infection. This chain is Ubiquitin-like protein ATG12, found in Mus musculus (Mouse).